We begin with the raw amino-acid sequence, 302 residues long: MLGLCGQRLPAAWVLLLLPFLPLLLLAAPAPHRASYKPVIVVHGLFDSSYSFRHLLEYINETHPGTVVTVLDLFDGRESLRPLWEQVQGFREAVVPIMAKAPQGVHLICYSQGGLVCRALLSVMDDHNVDSFISLSSPQMGQYGDTDYLKWLFPTSMRSNLYRICYSPWGQEFSICNYWHDPHHDDLYLNASSFLALINGERDHPNATVWRKNFLRVGHLVLIGGPDDGVITPWQSSFFGFYDANETVLEMEEQLVYLRDSFGLKTLLARGAIVRCPMAGISHTAWHSNRTLYETCIEPWLS.

Residues 1-27 (MLGLCGQRLPAAWVLLLLPFLPLLLLA) form the signal peptide. N60 is a glycosylation site (N-linked (GlcNAc...) asparagine). Intrachain disulfides connect C109/C117 and C165/C176. S111 functions as the Nucleophile in the catalytic mechanism. N-linked (GlcNAc...) asparagine glycosylation is found at N190 and N206. Residue D228 is part of the active site. Residue N245 is glycosylated (N-linked (GlcNAc...) asparagine). C276 and C296 form a disulfide bridge. H283 is an active-site residue. N-linked (GlcNAc...) asparagine glycosylation occurs at N289.

The protein belongs to the palmitoyl-protein thioesterase family. Broadly expressed, with highest levels in skeletal muscle.

It localises to the lysosome. It carries out the reaction hexadecanoyl-CoA + H2O = hexadecanoate + CoA + H(+). The enzyme catalyses S-hexadecanoyl-N-acetylcysteamine + H2O = N-acetylcysteamine + hexadecanoate + H(+). Functionally, catalyzes the cleavage of thioester bonds from S-palmitoyl-CoA or S-palmitoyl-N-acetylcysteamine (unbranched structures) but does not have activity against palmitoylcysteine or palmitoylated proteins, branched structures or bulky head groups. Conversely, hydrolyzes both long and short chain fatty acyl-CoA substrate. In terms of biological role, catalytically inactive due to lack of active site His-283. This chain is Lysosomal thioesterase PPT2, found in Homo sapiens (Human).